Reading from the N-terminus, the 1021-residue chain is Sodium/potassium-transporting ATPase subunit alpha-1 (1021 aa).

Positions 1–5 (MGKGV) are excised as a propeptide. Residues 1 to 11 (MGKGVGRDKYE) are compositionally biased toward basic and acidic residues. The tract at residues 1–36 (MGKGVGRDKYEPAAVSEHGDKKKAKKERDMDELKKE) is disordered. The Cytoplasmic portion of the chain corresponds to 6 to 85 (GRDKYEPAAV…NALTPPPTTP (80 aa)). Lysine 9 carries the N6-acetyllysine modification. A Phosphotyrosine modification is found at tyrosine 10. Serine 16 bears the Phosphoserine; by PKC mark. The residue at position 21 (lysine 21) is an N6-acetyllysine. A compositionally biased stretch (basic and acidic residues) spans 26–36 (KERDMDELKKE). Phosphoserine is present on residues serine 38 and serine 45. Residues 80 to 82 (PPP) form a phosphoinositide-3 kinase binding region. A helical membrane pass occupies residues 86–106 (EWVKFCRQLFGGFSMLLWIGA). Topologically, residues 107–129 (VLCFLAYGIQAATEEEPQNDNLY) are extracellular. A helical membrane pass occupies residues 130 to 150 (LGVVLSAVVIITGCFSYYQEA). The Cytoplasmic portion of the chain corresponds to 151-286 (KSSKIMESFK…GGQTPIAAEI (136 aa)). Serine 226 bears the Phosphoserine mark. Tyrosine 258 is subject to Phosphotyrosine. Residues 287–306 (EHFIHIITGVAVFLGVSFFI) form a helical membrane-spanning segment. The Extracellular portion of the chain corresponds to 307 to 318 (LSLILEYTWLEA). Residues 319–336 (VIFLIGIIVANVPEGLLA) traverse the membrane as a helical segment. The Cytoplasmic portion of the chain corresponds to 337 to 770 (TVTVCLTLTA…EEGRLIFDNL (434 aa)). Aspartate 374 (4-aspartylphosphate intermediate) is an active-site residue. Phosphoserine occurs at positions 450 and 482. Lysine 485 is a binding site for ATP. Phosphotyrosine is present on tyrosine 540. Positions 594 to 715 (RAAVPDAVGK…QGAIVAVTGD (122 aa)) are mediates interaction with SCN7A. At serine 666 the chain carries Phosphoserine. Aspartate 715 and aspartate 719 together coordinate Mg(2+). A helical transmembrane segment spans residues 771-790 (KKSIAYTLTSNIPEITPFLI). The Extracellular portion of the chain corresponds to 791–800 (FIIANIPLPL). The chain crosses the membrane as a helical span at residues 801–821 (GTVTILCIDLGTDMVPAISLA). Over 822–841 (YEQAESDIMKRQPRNPQTDK) the chain is Cytoplasmic. The chain crosses the membrane as a helical span at residues 842–864 (LVNERLISMAYGQIGMIQALGGF). Over 865-916 (FTYFVIMAENGFLPNHLLGIRVTWDDRWINDVEDSYGQQWTYEQRKIVEFTC) the chain is Extracellular. The helical transmembrane segment at 917 to 936 (HTAFFVSIVVVQWADLVICK) threads the bilayer. The Cytoplasmic segment spans residues 937–949 (TRRNSVFQQGMKN). Residue serine 941 is modified to Phosphoserine; by PKA. Residues 950–968 (KILIFGLFEETALAAFLSY) traverse the membrane as a helical segment. Residues 969 to 983 (CPGMGVALRMYPLKP) lie on the Extracellular side of the membrane. A helical transmembrane segment spans residues 984-1004 (TWWFCAFPYSLLIFVYDEVRK). Residues 1005 to 1021 (LIIRRRPGGWVEKETYY) lie on the Cytoplasmic side of the membrane.

It belongs to the cation transport ATPase (P-type) (TC 3.A.3) family. Type IIC subfamily. The sodium/potassium-transporting ATPase is composed of a catalytic alpha subunit, an auxiliary non-catalytic beta subunit and an additional regulatory subunit. Interacts with regulatory subunit FXYD1. Interacts with regulatory subunit FXYD3. Interacts with SIK1. Interacts with SLC35G1 and STIM1. Interacts with CLN3; this interaction regulates the sodium/potassium-transporting ATPase complex localization at the plasma membrane. Interacts with SCN7A; activates ATP1A1 P-type sodium:potassium-exchanging transporter activity which indirectly signals to nearby neurons to regulate sodium homeostasis. Post-translationally, phosphorylation on Tyr-10 modulates pumping activity. Phosphorylation of Ser-941 by PKA modulates the response of ATP1A1 to PKC. Dephosphorylation by protein phosphatase 2A (PP2A) following increases in intracellular sodium, leading to increase catalytic activity.

It localises to the cell membrane. The protein localises to the basolateral cell membrane. Its subcellular location is the sarcolemma. It is found in the cell projection. The protein resides in the axon. It localises to the melanosome. It catalyses the reaction K(+)(out) + Na(+)(in) + ATP + H2O = K(+)(in) + Na(+)(out) + ADP + phosphate + H(+). Specifically inhibited by cardiac glycosides such as digoxin or ouabain. Its function is as follows. This is the catalytic component of the active enzyme, which catalyzes the hydrolysis of ATP coupled with the exchange of sodium and potassium ions across the plasma membrane. This action creates the electrochemical gradient of sodium and potassium ions, providing the energy for active transport of various nutrients. Could also be part of an osmosensory signaling pathway that senses body-fluid sodium levels and controls salt intake behavior as well as voluntary water intake to regulate sodium homeostasis. The protein is Sodium/potassium-transporting ATPase subunit alpha-1 (ATP1A1) of Ovis aries (Sheep).